We begin with the raw amino-acid sequence, 208 residues long: 2-dehydro-3-deoxy-phosphogluconate aldolase (208 aa).

Glu41 serves as the catalytic Proton acceptor. 3 residues coordinate pyruvate: Arg45, Thr68, and Lys128. The active-site Schiff-base intermediate with substrate is the Lys128.

Belongs to the KHG/KDPG aldolase family. In terms of assembly, homotrimer.

It is found in the cytoplasm. The catalysed reaction is 2-dehydro-3-deoxy-6-phospho-D-gluconate = D-glyceraldehyde 3-phosphate + pyruvate. It functions in the pathway carbohydrate acid metabolism; 2-dehydro-3-deoxy-D-gluconate degradation; D-glyceraldehyde 3-phosphate and pyruvate from 2-dehydro-3-deoxy-D-gluconate: step 2/2. Functionally, involved in the degradation of glucose via the Entner-Doudoroff pathway. Catalyzes the reversible, stereospecific retro-aldol cleavage of 2-keto-3-deoxy-6-phosphogluconate (KDPG) to pyruvate and D-glyceraldehyde-3-phosphate. The sequence is that of 2-dehydro-3-deoxy-phosphogluconate aldolase from Zymomonas mobilis subsp. mobilis (strain ATCC 31821 / ZM4 / CP4).